The following is a 489-amino-acid chain: GTPase Der (489 aa).

EngA-type G domains follow at residues P30 to P199 and F227 to H403. Residues G36–S43, D85–L89, N151–D154, G233–S240, D280–I284, and N345–D348 contribute to the GTP site. One can recognise a KH-like domain in the interval R404 to R488.

This sequence belongs to the TRAFAC class TrmE-Era-EngA-EngB-Septin-like GTPase superfamily. EngA (Der) GTPase family. In terms of assembly, associates with the 50S ribosomal subunit.

Its function is as follows. GTPase that plays an essential role in the late steps of ribosome biogenesis. The sequence is that of GTPase Der from Leptospira interrogans serogroup Icterohaemorrhagiae serovar copenhageni (strain Fiocruz L1-130).